A 423-amino-acid polypeptide reads, in one-letter code: Deferrochelatase (423 aa).

Positions 1-35 (MQYEDENGVNEPSRRRLLKGIGALALAGSCPVAHA) form a signal peptide, tat-type signal. Residues 236–238 (GTA), His329, 334–336 (NPR), and Arg347 each bind heme b.

This sequence belongs to the DyP-type peroxidase family. EfeB subfamily. In terms of assembly, homodimer. Part of a ferrous iron transporter composed of EfeU, EfeO and EfeB. It depends on heme b as a cofactor. Predicted to be exported by the Tat system. The position of the signal peptide cleavage has not been experimentally proven.

It is found in the periplasm. The catalysed reaction is heme b + 2 H(+) = protoporphyrin IX + Fe(2+). Functionally, involved in the recovery of exogenous heme iron. Extracts iron from heme while preserving the protoporphyrin ring intact. The chain is Deferrochelatase (efeB) from Escherichia coli O6:K15:H31 (strain 536 / UPEC).